The following is a 409-amino-acid chain: MEGYLNPINIFSEIGRLKKVLLHRPGEELENLTPFIMKKFLFDDIPYLEVARQEHEVFASTLKNNSVEIEYVEDLVSEVLASSVALKDKFISQFILEAEIKTDSTINILKDYFSNLTIDNMVSKMISGIVSKELKNYVSSLDDLVNSASLFIIDPMPNVLFTRDPFASIGNGITINKMSNKVRHRETIFAEYIFKYHPIYKKNVPIWFNRWEESSLEGGDEFVLSKDILVIGISERTEAESVEKLAISLFKNKTSFNTILAFKIPKNRAYMHLDTVFTQIDYSVFTSFTSDDMYFSIYALTYNSSSSKIHVKEEKARLRDVLSFYLGRKIDIIKCAGGDLIHGAREQWNDGANILAIAPGEVIAYSRNHVTNKLFEENGIKVYRIPSSELSRGRGGPRCMSMPLVREDI.

The active-site Amidino-cysteine intermediate is C399.

It belongs to the arginine deiminase family.

It localises to the cytoplasm. The catalysed reaction is L-arginine + H2O = L-citrulline + NH4(+). It participates in amino-acid degradation; L-arginine degradation via ADI pathway; carbamoyl phosphate from L-arginine: step 1/2. The polypeptide is Arginine deiminase (Borrelia garinii subsp. bavariensis (strain ATCC BAA-2496 / DSM 23469 / PBi) (Borreliella bavariensis)).